Consider the following 447-residue polypeptide: Tubulin beta-6 chain (447 aa).

8 residues coordinate GTP: glutamine 11, glutamate 69, serine 138, glycine 142, threonine 143, glycine 144, asparagine 204, and asparagine 226. Residue glutamate 69 coordinates Mg(2+). Residues 426-447 form a disordered region; that stretch reads QDATAEEEGEFDEDEELDDGMM. Residues 429-447 are compositionally biased toward acidic residues; sequence TAEEEGEFDEDEELDDGMM.

This sequence belongs to the tubulin family. As to quaternary structure, dimer of alpha and beta chains. A typical microtubule is a hollow water-filled tube with an outer diameter of 25 nm and an inner diameter of 15 nM. Alpha-beta heterodimers associate head-to-tail to form protofilaments running lengthwise along the microtubule wall with the beta-tubulin subunit facing the microtubule plus end conferring a structural polarity. Microtubules usually have 13 protofilaments but different protofilament numbers can be found in some organisms and specialized cells. It depends on Mg(2+) as a cofactor.

The protein resides in the cytoplasm. It localises to the cytoskeleton. Tubulin is the major constituent of microtubules, a cylinder consisting of laterally associated linear protofilaments composed of alpha- and beta-tubulin heterodimers. Microtubules grow by the addition of GTP-tubulin dimers to the microtubule end, where a stabilizing cap forms. Below the cap, tubulin dimers are in GDP-bound state, owing to GTPase activity of alpha-tubulin. This chain is Tubulin beta-6 chain (TUBB6), found in Ectocarpus variabilis (Brown alga).